A 207-amino-acid chain; its full sequence is Outer-membrane lipoprotein LolB (207 aa).

The N-terminal stretch at methionine 1 to alanine 21 is a signal peptide. A lipid anchor (N-palmitoyl cysteine) is attached at cysteine 22. Cysteine 22 carries the S-diacylglycerol cysteine lipid modification.

Belongs to the LolB family. In terms of assembly, monomer.

The protein resides in the cell outer membrane. In terms of biological role, plays a critical role in the incorporation of lipoproteins in the outer membrane after they are released by the LolA protein. This is Outer-membrane lipoprotein LolB from Escherichia coli (strain K12 / MC4100 / BW2952).